The chain runs to 206 residues: Max dimerization protein 3 (206 aa).

Residues 8 to 25 (IQVLLQAAEFLERREREA) form an interaction with SIN3A and SIN3B region. Disordered stretches follow at residues 29 to 66 (YASLCPHHSPGTVCRRRKPPLQAPGALNSGRSVHNELE) and 122 to 171 (KLRS…QEDL). The region spanning 57-109 (SGRSVHNELEKRRRAQLKRCLEQLRQQMPLGVDCTRYTTLSLLRRARVHIQKL) is the bHLH domain. Low complexity predominate over residues 126–138 (KQQSLQQQLEQLQ). Positions 143 to 153 (ARERERLRADS) are enriched in basic and acidic residues.

In terms of assembly, efficient DNA binding requires dimerization with another bHLH protein. Binds DNA as a heterodimer with MAX. Interacts with SIN3A AND SIN3B. Interacts with RNF17. As to expression, expressed only in the proliferating areas of the testis and thymus.

Its subcellular location is the nucleus. Transcriptional repressor. Binds with MAX to form a sequence-specific DNA-binding protein complex which recognizes the core sequence 5'-CAC[GA]TG-3'. Antagonizes MYC transcriptional activity by competing for MAX and suppresses MYC dependent cell transformation. The chain is Max dimerization protein 3 (Mxd3) from Mus musculus (Mouse).